We begin with the raw amino-acid sequence, 341 residues long: L-threonine 3-dehydrogenase (341 aa).

Cys-38 lines the Zn(2+) pocket. Active-site charge relay system residues include Thr-40 and His-43. Positions 63, 64, 93, 96, 99, and 107 each coordinate Zn(2+). Residues Ile-175, Asp-195, Arg-200, 262-264 (LGI), and 286-287 (IY) each bind NAD(+).

It belongs to the zinc-containing alcohol dehydrogenase family. Homotetramer. Requires Zn(2+) as cofactor.

The protein localises to the cytoplasm. It catalyses the reaction L-threonine + NAD(+) = (2S)-2-amino-3-oxobutanoate + NADH + H(+). Its pathway is amino-acid degradation; L-threonine degradation via oxydo-reductase pathway; glycine from L-threonine: step 1/2. Functionally, catalyzes the NAD(+)-dependent oxidation of L-threonine to 2-amino-3-ketobutyrate. In Escherichia coli O127:H6 (strain E2348/69 / EPEC), this protein is L-threonine 3-dehydrogenase.